The following is a 176-amino-acid chain: NAD(P)H-quinone oxidoreductase subunit 6, chloroplastic (176 aa).

5 consecutive transmembrane segments (helical) span residues 10–30 (ILLV…VLLT), 32–52 (PISS…FYIP), 61–81 (AQLL…VMFM), 92–112 (LWTI…FSLI), and 152–172 (FYLP…GAIA).

The protein belongs to the complex I subunit 6 family. In terms of assembly, NDH is composed of at least 16 different subunits, 5 of which are encoded in the nucleus.

It localises to the plastid. The protein resides in the chloroplast thylakoid membrane. The enzyme catalyses a plastoquinone + NADH + (n+1) H(+)(in) = a plastoquinol + NAD(+) + n H(+)(out). The catalysed reaction is a plastoquinone + NADPH + (n+1) H(+)(in) = a plastoquinol + NADP(+) + n H(+)(out). Its function is as follows. NDH shuttles electrons from NAD(P)H:plastoquinone, via FMN and iron-sulfur (Fe-S) centers, to quinones in the photosynthetic chain and possibly in a chloroplast respiratory chain. The immediate electron acceptor for the enzyme in this species is believed to be plastoquinone. Couples the redox reaction to proton translocation, and thus conserves the redox energy in a proton gradient. In Chloranthus spicatus (Chulantree), this protein is NAD(P)H-quinone oxidoreductase subunit 6, chloroplastic (ndhG).